The following is a 501-amino-acid chain: ATP synthase subunit alpha (501 aa).

ATP is bound at residue 169–176; it reads GDRQTGKT.

This sequence belongs to the ATPase alpha/beta chains family. F-type ATPases have 2 components, CF(1) - the catalytic core - and CF(0) - the membrane proton channel. CF(1) has five subunits: alpha(3), beta(3), gamma(1), delta(1), epsilon(1). CF(0) has three main subunits: a(1), b(2) and c(9-12). The alpha and beta chains form an alternating ring which encloses part of the gamma chain. CF(1) is attached to CF(0) by a central stalk formed by the gamma and epsilon chains, while a peripheral stalk is formed by the delta and b chains.

The protein localises to the cell membrane. The catalysed reaction is ATP + H2O + 4 H(+)(in) = ADP + phosphate + 5 H(+)(out). In terms of biological role, produces ATP from ADP in the presence of a proton gradient across the membrane. The alpha chain is a regulatory subunit. This chain is ATP synthase subunit alpha, found in Streptococcus pneumoniae (strain Hungary19A-6).